We begin with the raw amino-acid sequence, 562 residues long: MKDRVRSLVAEGIERCFADGSLASNQMPAIVIEKPAHAEHGDFACTVAMSMAKAERKAPRVIAETIVKHIENGESGIIGGIDIAGPGFINFRIKNEAWSRTLAVVEAAGASFGRSCAGEERKVQVEFVSANPTGPLHIGHGRGAAIGDTICRLLSASGFDVTREFYYNDAGAQIANLALSVQSRCLGIEPGDPRWPADGYQGDYIKDVARSYLNRETVDAGDQHVTAAGDPNDLDAIRRFAVAYLRREQDQDLLAFDVHFDVYSLESSLYTEGRVEEVVRRLIENGHTFEQDGALWLRTTDFGDDKDRVMRKSDGSYTYFVPDVAYHLAKWERGFTRVINEQGADHHSTITRVRAGLQALNAGIPQEWPEYVLHQMVTVMRGGEEVKISKRAGSYVTLRDLIDEVGRDATRFFFLMRKPDSQLVFDIDLAKQQSLENPVYYVQYAHARISSIFEAACDRGISVPSFPDAHVDLLETPEEIELIKLIGSFPEVIEGSALSFEPHRITYYLQELAGAFHSFYNKNRVIGEGKELSSARLFLLKGVAQVLKNGLALLGVSAPEKM.

Residues 130-140 (ANPTGPLHIGH) carry the 'HIGH' region motif.

This sequence belongs to the class-I aminoacyl-tRNA synthetase family. In terms of assembly, monomer.

The protein resides in the cytoplasm. It carries out the reaction tRNA(Arg) + L-arginine + ATP = L-arginyl-tRNA(Arg) + AMP + diphosphate. This Geobacter metallireducens (strain ATCC 53774 / DSM 7210 / GS-15) protein is Arginine--tRNA ligase.